Consider the following 425-residue polypeptide: Enolase (425 aa).

Gln-162 is a (2R)-2-phosphoglycerate binding site. The active-site Proton donor is Glu-204. Mg(2+)-binding residues include Asp-241, Glu-282, and Asp-309. The (2R)-2-phosphoglycerate site is built by Lys-334, Arg-363, Ser-364, and Lys-385. The Proton acceptor role is filled by Lys-334.

It belongs to the enolase family. Mg(2+) serves as cofactor.

It is found in the cytoplasm. Its subcellular location is the secreted. The protein resides in the cell surface. The catalysed reaction is (2R)-2-phosphoglycerate = phosphoenolpyruvate + H2O. Its pathway is carbohydrate degradation; glycolysis; pyruvate from D-glyceraldehyde 3-phosphate: step 4/5. Functionally, catalyzes the reversible conversion of 2-phosphoglycerate (2-PG) into phosphoenolpyruvate (PEP). It is essential for the degradation of carbohydrates via glycolysis. This Micrococcus luteus (strain ATCC 4698 / DSM 20030 / JCM 1464 / CCM 169 / CCUG 5858 / IAM 1056 / NBRC 3333 / NCIMB 9278 / NCTC 2665 / VKM Ac-2230) (Micrococcus lysodeikticus) protein is Enolase.